The sequence spans 52 residues: Proteinase inhibitor (52 aa).

Q1 is subject to Pyrrolidone carboxylic acid. Disulfide bonds link C3–C40, C6–C24, C7–C36, and C13–C49.

The protein belongs to the protease inhibitor I20 (potato type II proteinase inhibitor) family.

It localises to the secreted. The chain is Proteinase inhibitor from Solanum melongena (Eggplant).